The following is a 90-amino-acid chain: Small ribosomal subunit protein bS18 (90 aa).

The protein belongs to the bacterial ribosomal protein bS18 family. Part of the 30S ribosomal subunit. Forms a tight heterodimer with protein bS6.

In terms of biological role, binds as a heterodimer with protein bS6 to the central domain of the 16S rRNA, where it helps stabilize the platform of the 30S subunit. In Bordetella bronchiseptica (strain ATCC BAA-588 / NCTC 13252 / RB50) (Alcaligenes bronchisepticus), this protein is Small ribosomal subunit protein bS18.